The sequence spans 360 residues: Magnesium transporter NIPA2 (360 aa).

Residues 1-9 (MSQGHGKYD) lie on the Extracellular side of the membrane. Residues 10–30 (FYIGLGLAMSSSIFIGGSFIL) form a helical membrane-spanning segment. Residues 31–56 (KKKGLLRLARKGSTRAGQGGHAYLKE) are Cytoplasmic-facing. The chain crosses the membrane as a helical span at residues 57–77 (WLWWAGLLSMGAGEVANFAAY). Position 78 (A78) is a topological domain, extracellular. The helical transmembrane segment at 79–99 (FAPATLVTPLGALSVLVSAIL) threads the bilayer. The Cytoplasmic portion of the chain corresponds to 100 to 107 (SSYFLNER). Residues 108–128 (LNLHGKIGCLLSILGSTVMVI) traverse the membrane as a helical segment. Residues 129 to 149 (HAPKEEEIETLNEMSHKLGDP) lie on the Extracellular side of the membrane. A helical transmembrane segment spans residues 150–170 (GFVVFATLVVIVSLILIFVVG). At 171–175 (PRHGQ) the chain is on the cytoplasmic side. Residues 176-196 (TNILVYITICSVIGAVSVSCA) traverse the membrane as a helical segment. Over 197–215 (KGLGIAIKELFAGKPVLQH) the chain is Extracellular. The chain crosses the membrane as a helical span at residues 216 to 236 (PLTWILLLSLIVCVSTQINYL). At 237 to 246 (NRALDIFNTS) the chain is on the cytoplasmic side. A helical membrane pass occupies residues 247 to 267 (IVTPIYYVFFTTSVITCSAIL). At 268–278 (FKEWQDMPVDD) the chain is on the extracellular side. The chain crosses the membrane as a helical span at residues 279–299 (VIGTLSGFFTIIVGIFLLHAF). At 300 to 360 (KDVSFSLSSL…SRRNGNLTAF (61 aa)) the chain is on the cytoplasmic side.

This sequence belongs to the NIPA family.

Its subcellular location is the cell membrane. It localises to the early endosome. It carries out the reaction Mg(2+)(in) = Mg(2+)(out). Functionally, acts as a selective Mg(2+) transporter. This chain is Magnesium transporter NIPA2 (NIPA2), found in Bos taurus (Bovine).